A 411-amino-acid polypeptide reads, in one-letter code: NADH-quinone oxidoreductase subunit D 2 (411 aa).

Belongs to the complex I 49 kDa subunit family. In terms of assembly, NDH-1 is composed of 14 different subunits. Subunits NuoB, C, D, E, F, and G constitute the peripheral sector of the complex.

It localises to the cell membrane. It catalyses the reaction a quinone + NADH + 5 H(+)(in) = a quinol + NAD(+) + 4 H(+)(out). Functionally, NDH-1 shuttles electrons from NADH, via FMN and iron-sulfur (Fe-S) centers, to quinones in the respiratory chain. The immediate electron acceptor for the enzyme in this species is believed to be ubiquinone. Couples the redox reaction to proton translocation (for every two electrons transferred, four hydrogen ions are translocated across the cytoplasmic membrane), and thus conserves the redox energy in a proton gradient. This is NADH-quinone oxidoreductase subunit D 2 from Chloroflexus aurantiacus (strain ATCC 29366 / DSM 635 / J-10-fl).